Reading from the N-terminus, the 277-residue chain is Undecaprenyl-diphosphatase (277 aa).

7 helical membrane-spanning segments follow: residues 3-23 (IALL…EFLP), 44-64 (AKVF…LVYW), 82-102 (QFAL…LLFG), 109-129 (LFTP…ILWA), 188-208 (ATDF…VYSL), 218-238 (ADVP…WLCI), and 249-269 (SFIP…ATAW).

It belongs to the UppP family.

The protein resides in the cell inner membrane. It carries out the reaction di-trans,octa-cis-undecaprenyl diphosphate + H2O = di-trans,octa-cis-undecaprenyl phosphate + phosphate + H(+). Its function is as follows. Catalyzes the dephosphorylation of undecaprenyl diphosphate (UPP). Confers resistance to bacitracin. The chain is Undecaprenyl-diphosphatase from Polaromonas sp. (strain JS666 / ATCC BAA-500).